Reading from the N-terminus, the 257-residue chain is Undecaprenyl-diphosphatase (257 aa).

A run of 8 helical transmembrane segments spans residues 4–24 (LIRVVILAIVQGIAEFLPISS), 41–61 (SVTLEIILHAGTLGSILVVFW), 74–94 (VIGLLVIGTLPAVVIGLTIKT), 103–123 (PLLAGAMLIVTGVMLIVLGRL), 133–153 (LGLGAAFLVGCFQAFAILPGI), 173–193 (SVTFSFLLAIPAILGATVLAI), 209–229 (VLSIGAAVAFAVGIVALKWLI), and 236–256 (RLHWFAYWCIPAGLLVVLLNL).

This sequence belongs to the UppP family.

The protein localises to the cell inner membrane. It catalyses the reaction di-trans,octa-cis-undecaprenyl diphosphate + H2O = di-trans,octa-cis-undecaprenyl phosphate + phosphate + H(+). Its function is as follows. Catalyzes the dephosphorylation of undecaprenyl diphosphate (UPP). Confers resistance to bacitracin. This is Undecaprenyl-diphosphatase from Rhodopirellula baltica (strain DSM 10527 / NCIMB 13988 / SH1).